A 1116-amino-acid polypeptide reads, in one-letter code: Disease resistance protein RGA5 (1116 aa).

The segment at 1–177 (MDAPASFSLG…HHGVSANLVG (177 aa)) is structured coiled coil (CC) domain. Residues 182-466 (KTKLNRWLSD…WSAEGFVSAN (285 aa)) enclose the NB-ARC domain. LRR repeat units follow at residues 608–631 (LFQL…ISGL), 633–653 (YLET…LVHL), 654–675 (PNLL…GCMR), 677–701 (LRTL…ELTN), 732–755 (LSNL…DISS), 786–808 (LHKL…DNLT), 810–830 (LPSL…RFIF), 835–857 (LPVL…AGAM), and 858–882 (PNLQ…LFGI). The segment at 935–971 (EEESHPLEKQHHKREKGSSAGHGVLEKESVEDSEKNT) is disordered. A compositionally biased stretch (basic and acidic residues) spans 958–971 (VLEKESVEDSEKNT). The region spanning 997-1066 (RTKIVVKVHM…KCGLAELLMV (70 aa)) is the HMA domain. Residues 1000 to 1070 (IVVKVHMPCG…AELLMVELVE (71 aa)) form an HMA-like domain region.

It belongs to the disease resistance NB-LRR family. Forms homodimer or heterodimer with RGA4 through its coiled coil (CC) domain. Interacts with AVR1-Pia and AVR-CO39 through its C-terminal part containing the HMA-like domain. Expressed in leaves.

Its subcellular location is the cytoplasm. In terms of biological role, disease resistance (R) protein that recognizes the AVR-Pia and AVR1-CO39 effector avirulence proteins from M.oryzae. Resistance proteins guard the plant against pathogens that contain an appropriate avirulence protein via an indirect interaction with this avirulence protein. That triggers a defense system including the hypersensitive response, which restricts the pathogen growth. Contribution of RGA4 is required to recognize the effector avirulence proteins AVR-Pia and AVR1-CO39 from M.oryzae. Acts as a repressor of the RGA4-mediated cell death activation. Upon infection, recognition and binding of the AVR effectors relieve the RGA5-mediated repression and triggers the hypersensitive response. Immune response triggered by the RGA4-RGA5 -mediated recognition of AVR1-CO39 confers resistance to X.oryzae pathovars. The chain is Disease resistance protein RGA5 from Oryza sativa subsp. japonica (Rice).